The sequence spans 579 residues: Zinc metalloproteinase nas-11 (579 aa).

An N-terminal signal peptide occupies residues 1–17 (MTPSLVFLIVVIVVVEG). The propeptide occupies 18–328 (QGWRPWDRFN…AAPGSSRLKK (311 aa)). The disordered stretch occupies residues 35–58 (WGGNNWGTRQRNQEPHDIPPPVPP). Asn-256 is a glycosylation site (N-linked (GlcNAc...) asparagine). Positions 293–312 (GDDEIPLPDADTDDEDDDDS) are enriched in acidic residues. The interval 293 to 323 (GDDEIPLPDADTDDEDDDDSTNSASGAAPGS) is disordered. The Peptidase M12A domain maps to 329 to 536 (SALYFEGNLI…IELLKKMYCQ (208 aa)). 5 disulfide bridges follow: Cys-375–Cys-535, Cys-401–Cys-421, Cys-539–Cys-575, Cys-546–Cys-568, and Cys-555–Cys-572. Zn(2+) is bound at residue His-430. The active site involves Glu-431. Zn(2+) contacts are provided by His-434 and His-440. Asn-454 is a glycosylation site (N-linked (GlcNAc...) asparagine). The 37-residue stretch at 539–575 (CDDKNVYCGAWALKDLCKNPGHDQYMAANCKKSCGLC) folds into the ShKT domain.

The cofactor is Zn(2+). In terms of tissue distribution, expressed in the anterior part of the intestine, CEP neurons and to a lesser extent in hypodermis.

The protein localises to the secreted. Metalloprotease. In Caenorhabditis elegans, this protein is Zinc metalloproteinase nas-11 (nas-11).